A 277-amino-acid polypeptide reads, in one-letter code: Cell death abnormality protein 2 (277 aa).

The region spanning 14–112 (FYFPGMSRED…EASLLSAYKK (99 aa)) is the SH2 domain. Positions 113–173 (PIIEVVVGTF…PANYVQVQSG (61 aa)) constitute an SH3 1 domain. Residues 179 to 217 (RISKGTSQSSIGSSGNGAERFSSTSTSSENAEAHPTLPT) are disordered. The span at 182-206 (KGTSQSSIGSSGNGAERFSSTSTSS) shows a compositional bias: low complexity. One can recognise an SH3 2 domain in the interval 214-275 (TLPTTAKVTF…PFTYIRFNTA (62 aa)).

This sequence belongs to the CRK family. As to quaternary structure, interacts with ced-5 (via C-terminus which contains a candidate SH3-binding, proline-rich region). Forms a ternary complex with ced-5 and ced-12. Interacts (via SH-2 domain) with src-1 (when activated and phosphorylated at 'Tyr-416').

Required for cell migration and engulfment of cell corpses but not for programmed cell death/apoptosis. Also has a role in the migration of the 2 gonadal distal tip cells (DTCs). This Caenorhabditis briggsae protein is Cell death abnormality protein 2.